The chain runs to 411 residues: Protein translocase subunit SecY (411 aa).

10 helical membrane-spanning segments follow: residues 11-31 (IIFTLFLLVLARLGIFIPVPG), 52-72 (IFSGGGFSTIGIFALGIVPYI), 111-131 (ALGWATLQSGAISIWVKPYVF), 135-155 (FAFVCESVLALTAGSMIIMWL), 163-180 (GIGNGASLLIFQNIVSGL), 197-217 (SLKFGLFIAIFLLMIIITICV), 253-273 (VMPIVFASASMALPSYLTQII), 291-311 (LYLLLYCALILFFSYFYTSIV), 349-369 (TFLGASFLFTVALIPFIIEKV), and 377-397 (GLGATSLLILVGVAIDTAKQI).

Belongs to the SecY/SEC61-alpha family. As to quaternary structure, component of the plastid Sec protein translocase complex, which is composed of at least SecY, SecE and SecG.

It localises to the plastid. The protein resides in the chloroplast thylakoid membrane. Functionally, the central subunit of the protein translocation channel SecYE. Consists of two halves formed by TMs 1-5 and 6-10. These two domains form a lateral gate at the front which open onto the bilayer between TMs 2 and 7, and are clamped together by SecE at the back. The channel is closed by both a pore ring composed of hydrophobic SecY resides and a short helix (helix 2A) on the extracellular side of the membrane which forms a plug. The chain is Protein translocase subunit SecY from Pyropia yezoensis (Susabi-nori).